Consider the following 750-residue polypeptide: Photosystem I P700 chlorophyll a apoprotein A1 (750 aa).

8 helical membrane passes run 70-93, 156-179, 195-219, 291-309, 346-369, 385-411, 433-455, and 531-549; these read VFSAHFGQLSIIFLWLSGMYFHGA, LYCTAIGALVFAALMLFAGWFHYH, LNHHLAGLLGLGSLSWAGHQVHVSL, IAHHHLAIAILFLIAGHMY, WHAQLSLNLAMLGSLTIVVAHHMY, LSLFTHHMWIGGFLIVGAAAHAAIFMV, AIISHLNWVCIFLGFHSFGLYIH, and FLVHHIHAFTIHVTVLILL. C573 and C582 together coordinate [4Fe-4S] cluster. Helical transmembrane passes span 589 to 610 and 664 to 686; these read HVFLGLFWMYNAISVVIFHFSW and LSAYGLFFLGAHFVWAFSLMFLF. H675 contributes to the chlorophyll a' binding site. Chlorophyll a is bound by residues M683 and Y691. Residue W692 coordinates phylloquinone. The chain crosses the membrane as a helical span at residues 724-744; the sequence is AVGVTHYLLGGIATTWAFFLA.

Belongs to the PsaA/PsaB family. The PsaA/B heterodimer binds the P700 chlorophyll special pair and subsequent electron acceptors. PSI consists of a core antenna complex that captures photons, and an electron transfer chain that converts photonic excitation into a charge separation. The eukaryotic PSI reaction center is composed of at least 11 subunits. The cofactor is P700 is a chlorophyll a/chlorophyll a' dimer, A0 is one or more chlorophyll a, A1 is one or both phylloquinones and FX is a shared 4Fe-4S iron-sulfur center..

The protein resides in the plastid. The protein localises to the chloroplast thylakoid membrane. The enzyme catalyses reduced [plastocyanin] + hnu + oxidized [2Fe-2S]-[ferredoxin] = oxidized [plastocyanin] + reduced [2Fe-2S]-[ferredoxin]. Its function is as follows. PsaA and PsaB bind P700, the primary electron donor of photosystem I (PSI), as well as the electron acceptors A0, A1 and FX. PSI is a plastocyanin-ferredoxin oxidoreductase, converting photonic excitation into a charge separation, which transfers an electron from the donor P700 chlorophyll pair to the spectroscopically characterized acceptors A0, A1, FX, FA and FB in turn. Oxidized P700 is reduced on the lumenal side of the thylakoid membrane by plastocyanin. The protein is Photosystem I P700 chlorophyll a apoprotein A1 of Nasturtium officinale (Watercress).